The chain runs to 651 residues: MPKIHQLSATLSNQIAAGEVIERPASVVKELVENSIDAQATQIDVLISAAGLQEIRVSDNGIGIAPDDVATAFLRHATSKILTTRDLFNVHSLGFRGEALASIAAVADVKLTTAMDSGIGTQIHVKGGEVEAQSTAAHRRGTDVEVNDLFFNTPARLKYMKSQQTELGKIVDIVSRLAMANPDIAFTVSHDGNMVVRTAGQGDLRQTLAGIYGLSVARSMVDFKAQDLDFRVSGLTSLPETTRASRNYLSLVVNGRYIKNFQLTKAVIAGYGSKLMVGRYPMGVINIEMDAALVDVNVHPTKAEVRLSKEDQLSHLLSEAIRTRLAKENLIPDALDNLPKRERYDLDQLELTLNKISPKTMPSVQPQQGQQLRENTTTNLADTAAEEPTPAPTSPDLEIGDLDDQPIFNEPQRLAAWDQRYQRLASNVVPTLMADEPEPDISHVESAERFPNLTYLAQVHGTYLLAESGDGLYILDQHAAQERVNYEYYRQAIGEVSNDQQHLLVPIVLDYSAADAISIRDHRDVLESVGLYLEDFGQNSFVVEHHPTWFKAGQEEDTIKEMVDWVLRDGRMTVAAFREKTAIMMSCKRAIKANHHLDDRQARALLQKLPECENPFNCPHGRPVLVHFSNTDLEKMFKRIQDSHESGEMQA.

The segment at 383-405 (TAAEEPTPAPTSPDLEIGDLDDQ) is disordered.

This sequence belongs to the DNA mismatch repair MutL/HexB family.

Its function is as follows. This protein is involved in the repair of mismatches in DNA. It is required for dam-dependent methyl-directed DNA mismatch repair. May act as a 'molecular matchmaker', a protein that promotes the formation of a stable complex between two or more DNA-binding proteins in an ATP-dependent manner without itself being part of a final effector complex. The protein is DNA mismatch repair protein MutL of Lacticaseibacillus casei (strain BL23) (Lactobacillus casei).